The primary structure comprises 1052 residues: Membrane-bound transcription factor site-1 protease (1052 aa).

Residues 1–17 (MKLVNIWLLLLVVLLCG) form the signal peptide. Positions 18–186 (KKHLGDRLGK…TGRHSSRRLL (169 aa)) are excised as a propeptide. Asparagine 148 is a glycosylation site (N-linked (GlcNAc...) asparagine). Serine 168 carries the post-translational modification Phosphoserine. At 187–999 (RAIPRQVAQT…MPGRYNQEVG (813 aa)) the chain is on the lumenal side. Residues 190-472 (PRQVAQTLQA…HGKLDLLRAY (283 aa)) enclose the Peptidase S8 domain. Aspartate 218 serves as the catalytic Charge relay system. An N-linked (GlcNAc...) asparagine glycan is attached at asparagine 236. The active-site Charge relay system is the histidine 249. Asparagine 305 carries an N-linked (GlcNAc...) asparagine glycan. Serine 414 serves as the catalytic Charge relay system. 2 N-linked (GlcNAc...) asparagine glycosylation sites follow: asparagine 515 and asparagine 728. The segment covering 877–887 (PSLSHSGNRQR) has biased composition (polar residues). Residues 877–900 (PSLSHSGNRQRPPSGAGLAPPERM) form a disordered region. Asparagine 939 carries an N-linked (GlcNAc...) asparagine glycan. A helical membrane pass occupies residues 1000–1022 (QTIPVFAFLGAMVALAFFVVQIS). The Cytoplasmic segment spans residues 1023-1052 (KAKSRPKRRRPRAKRPQLAQQAHPARTPSV). Positions 1026–1037 (SRPKRRRPRAKR) are enriched in basic residues. The interval 1026–1052 (SRPKRRRPRAKRPQLAQQAHPARTPSV) is disordered.

This sequence belongs to the peptidase S8 family. Interacts with LYSET; this interaction bridges GNPTAB to MBTPS1. Ca(2+) serves as cofactor. Post-translationally, the 148 kDa zymogen is processed progressively into two membrane-bound 120 and 106 kDa forms in the endoplasmic reticulum, and late into a secreted 98 kDa form. The propeptide is autocatalytically removed through an intramolecular cleavage after Leu-186. Further cleavage generates 14, 10, and 8 kDa intermediates. In terms of tissue distribution, widely expressed. In adult rat, highly expressed in anterior pituitary, thyroid and adrenal glands and in liver. In 2-day old rat, detected in developing skin, striated muscles, cardiac muscles, bones, teeth and internal organs. Highly expressed in retina, cerebellum, pituitary, submaxillary, thyroid and adrenal glands, molars, thymus, kidney and intestine.

The protein localises to the endoplasmic reticulum membrane. Its subcellular location is the golgi apparatus membrane. It carries out the reaction Processes precursors containing basic and hydrophobic/aliphatic residues at P4 and P2, respectively, with a relatively relaxed acceptance of amino acids at P1 and P3.. Inhibited by divalent copper and zinc ions, but not by nickel or cobalt. Inhibited by its prosegment, but not smaller fragments. Inhibited by 4-(2-aminoethyl)benzenesulfonyl fluoride (AEBSF), a serine protease inhibitor. In terms of biological role, serine protease that cleaves after hydrophobic or small residues, provided that Arg or Lys is in position P4: known substrates include SREBF1/SREBP1, SREBF2/SREBP2, BDNF, GNPTAB, ATF6, ATF6B and FAM20C. Cleaves substrates after Arg-Ser-Val-Leu (SREBP2), Arg-His-Leu-Leu (ATF6), Arg-Gly-Leu-Thr (BDNF) and its own propeptide after Arg-Arg-Leu-Leu. Catalyzes the first step in the proteolytic activation of the sterol regulatory element-binding proteins (SREBPs) SREBF1/SREBP1 and SREBF2/SREBP2. Also mediates the first step in the proteolytic activation of the cyclic AMP-dependent transcription factor ATF-6 (ATF6 and ATF6B). Mediates the protein cleavage of GNPTAB into subunit alpha and beta, thereby participating in biogenesis of lysosomes. Cleaves the propeptide from FAM20C which is required for FAM20C secretion from the Golgi apparatus membrane and for enhancement of FAM20C kinase activity, promoting osteoblast differentiation and biomineralization. Involved in the regulation of M6P-dependent Golgi-to-lysosome trafficking of lysosomal enzymes. It is required for the activation of CREB3L2/BBF2H7, a transcriptional activator of MIA3/TANGO and other genes controlling mega vesicle formation. Therefore, it plays a key role in the regulation of mega vesicle-mediated collagen trafficking. In astrocytes and osteoblasts, upon DNA damage and ER stress, mediates the first step of the regulated intramembrane proteolytic activation of the transcription factor CREB3L1, leading to the inhibition of cell-cycle progression. This is Membrane-bound transcription factor site-1 protease (Mbtps1) from Rattus norvegicus (Rat).